Consider the following 350-residue polypeptide: 3'-hydroxy-N-methyl-(S)-coclaurine 4'-O-methyltransferase (350 aa).

G196, D219, D239, M240, and K253 together coordinate S-adenosyl-L-methionine. The active-site Proton acceptor is H257.

This sequence belongs to the class I-like SAM-binding methyltransferase superfamily. Cation-independent O-methyltransferase family. COMT subfamily. As to quaternary structure, homodimer.

It carries out the reaction (S)-3'-hydroxy-N-methylcoclaurine + S-adenosyl-L-methionine = (S)-reticuline + S-adenosyl-L-homocysteine + H(+). It participates in alkaloid biosynthesis; (S)-reticuline biosynthesis; (S)-reticuline from (S)-norcoclaurine: step 4/4. Catalyzes the transfer of the methyl group to the 4'-hydroxyl group of 3'-hydroxy-N-methylcoclaurine to form reticuline. The polypeptide is 3'-hydroxy-N-methyl-(S)-coclaurine 4'-O-methyltransferase (Coptis japonica (Japanese goldthread)).